A 329-amino-acid chain; its full sequence is Malate dehydrogenase (329 aa).

Position 12 to 18 (12 to 18 (GAAGQIG)) interacts with NAD(+). Residues Arg-95 and Arg-101 each contribute to the substrate site. Residues Asn-108, Gln-115, and 132-134 (VGN) each bind NAD(+). Residues Asn-134 and Arg-165 each contribute to the substrate site. His-190 serves as the catalytic Proton acceptor.

This sequence belongs to the LDH/MDH superfamily. MDH type 2 family.

The catalysed reaction is (S)-malate + NAD(+) = oxaloacetate + NADH + H(+). Catalyzes the reversible oxidation of malate to oxaloacetate. The chain is Malate dehydrogenase from Bordetella avium (strain 197N).